Reading from the N-terminus, the 364-residue chain is Serpentine receptor class epsilon-27 (364 aa).

A run of 7 helical transmembrane segments spans residues 31–51 (VIAS…VVSL), 64–84 (FIIL…GKLI), 125–145 (LLII…FGAV), 167–187 (IFIP…CSCL), 195–215 (IITI…VFFL), 257–277 (LIFS…TLLL), and 290–310 (NALF…IPAW).

This sequence belongs to the nematode receptor-like protein sre family.

The protein resides in the membrane. This is Serpentine receptor class epsilon-27 (sre-27) from Caenorhabditis elegans.